Consider the following 275-residue polypeptide: Formamidopyrimidine-DNA glycosylase (275 aa).

Pro-2 serves as the catalytic Schiff-base intermediate with DNA. Catalysis depends on Glu-3, which acts as the Proton donor. The active-site Proton donor; for beta-elimination activity is Lys-58. DNA-binding residues include His-91 and Arg-110. The segment at 238–272 (QVYGQTGKSCPRCGQAIVKLKVGGRGTHICPKCQK) adopts an FPG-type zinc-finger fold. The Proton donor; for delta-elimination activity role is filled by Arg-262.

This sequence belongs to the FPG family. As to quaternary structure, monomer. It depends on Zn(2+) as a cofactor.

It carries out the reaction Hydrolysis of DNA containing ring-opened 7-methylguanine residues, releasing 2,6-diamino-4-hydroxy-5-(N-methyl)formamidopyrimidine.. The enzyme catalyses 2'-deoxyribonucleotide-(2'-deoxyribose 5'-phosphate)-2'-deoxyribonucleotide-DNA = a 3'-end 2'-deoxyribonucleotide-(2,3-dehydro-2,3-deoxyribose 5'-phosphate)-DNA + a 5'-end 5'-phospho-2'-deoxyribonucleoside-DNA + H(+). Functionally, involved in base excision repair of DNA damaged by oxidation or by mutagenic agents. Acts as a DNA glycosylase that recognizes and removes damaged bases. Has a preference for oxidized purines, such as 7,8-dihydro-8-oxoguanine (8-oxoG). Has AP (apurinic/apyrimidinic) lyase activity and introduces nicks in the DNA strand. Cleaves the DNA backbone by beta-delta elimination to generate a single-strand break at the site of the removed base with both 3'- and 5'-phosphates. The sequence is that of Formamidopyrimidine-DNA glycosylase from Streptococcus pyogenes serotype M3 (strain ATCC BAA-595 / MGAS315).